A 177-amino-acid polypeptide reads, in one-letter code: Large ribosomal subunit protein uL6 (177 aa).

This sequence belongs to the universal ribosomal protein uL6 family. Part of the 50S ribosomal subunit.

Functionally, this protein binds to the 23S rRNA, and is important in its secondary structure. It is located near the subunit interface in the base of the L7/L12 stalk, and near the tRNA binding site of the peptidyltransferase center. This chain is Large ribosomal subunit protein uL6, found in Pseudomonas fluorescens (strain ATCC BAA-477 / NRRL B-23932 / Pf-5).